A 452-amino-acid chain; its full sequence is UDP-N-acetylmuramoylalanine--D-glutamate ligase (452 aa).

119–125 provides a ligand contact to ATP; it reads GSNGKTT.

The protein belongs to the MurCDEF family.

It is found in the cytoplasm. It carries out the reaction UDP-N-acetyl-alpha-D-muramoyl-L-alanine + D-glutamate + ATP = UDP-N-acetyl-alpha-D-muramoyl-L-alanyl-D-glutamate + ADP + phosphate + H(+). It functions in the pathway cell wall biogenesis; peptidoglycan biosynthesis. Its function is as follows. Cell wall formation. Catalyzes the addition of glutamate to the nucleotide precursor UDP-N-acetylmuramoyl-L-alanine (UMA). This Streptococcus pyogenes serotype M6 (strain ATCC BAA-946 / MGAS10394) protein is UDP-N-acetylmuramoylalanine--D-glutamate ligase.